A 599-amino-acid chain; its full sequence is Sulfite reductase [NADPH] flavoprotein alpha-component (599 aa).

Residues 64 to 202 form the Flavodoxin-like domain; that stretch reads ITIISASQTG…AASEWRARVV (139 aa). FMN-binding positions include 70–75, 117–120, and 153–162; these read SQTGNA, STQG, and LGDSSYEFFC. An FAD-binding FR-type domain is found at 234-448; sequence DAPLVASLSV…IEHNDNFRLP (215 aa). FAD-binding positions include T322, A356, 386–389, 404–406, Y410, and 419–422; these read RLYS, TVG, and GGAS. NADP(+) contacts are provided by residues 519–520, 525–529, and D561; these read SR and KVYVQ. Y599 serves as a coordination point for FAD.

It belongs to the NADPH-dependent sulphite reductase flavoprotein subunit CysJ family. This sequence in the N-terminal section; belongs to the flavodoxin family. In the C-terminal section; belongs to the flavoprotein pyridine nucleotide cytochrome reductase family. As to quaternary structure, alpha(8)-beta(8). The alpha component is a flavoprotein, the beta component is a hemoprotein. FAD serves as cofactor. Requires FMN as cofactor.

It carries out the reaction hydrogen sulfide + 3 NADP(+) + 3 H2O = sulfite + 3 NADPH + 4 H(+). It participates in sulfur metabolism; hydrogen sulfide biosynthesis; hydrogen sulfide from sulfite (NADPH route): step 1/1. Its function is as follows. Component of the sulfite reductase complex that catalyzes the 6-electron reduction of sulfite to sulfide. This is one of several activities required for the biosynthesis of L-cysteine from sulfate. The flavoprotein component catalyzes the electron flow from NADPH -&gt; FAD -&gt; FMN to the hemoprotein component. The protein is Sulfite reductase [NADPH] flavoprotein alpha-component of Escherichia coli O157:H7.